A 283-amino-acid polypeptide reads, in one-letter code: MEERAVKLAVYGKGGIGKSTTSCNISVALARRGKKVLQIGCDPKHDSTFTLTGFLIPTIIDTLEAKGYHHEDIYPEDVIYRGYGGVDCVEAGGPPAGAGCGGYVVGETVKLLKELNAFDEYDVILFDVLGDVVCGGFAAPLNYADYCLIVTDNGFDALFAANRIAASVREKAKTRKLRLAGLIGNRTSKRDLIDKYVSAVPMPVIEVLPLIEDIRVSRVKGKTLFEMAETDPSLEPVCQYYLNIADELLARPEGIVPQPAEDRELFALLSDFYNTPARQLALV.

ATP-binding positions include 15-20 (GIGKST) and Lys-44. Residue Ser-19 coordinates Mg(2+). Cys-100 and Cys-134 together coordinate [4Fe-4S] cluster. 185 to 186 (NR) contacts ATP.

Belongs to the NifH/BchL/ChlL family. In terms of assembly, homodimer. Protochlorophyllide reductase is composed of three subunits; ChlL, ChlN and ChlB. [4Fe-4S] cluster is required as a cofactor.

It carries out the reaction chlorophyllide a + oxidized 2[4Fe-4S]-[ferredoxin] + 2 ADP + 2 phosphate = protochlorophyllide a + reduced 2[4Fe-4S]-[ferredoxin] + 2 ATP + 2 H2O. Its pathway is porphyrin-containing compound metabolism; chlorophyll biosynthesis (light-independent). Component of the dark-operative protochlorophyllide reductase (DPOR) that uses Mg-ATP and reduced ferredoxin to reduce ring D of protochlorophyllide (Pchlide) to form chlorophyllide a (Chlide). This reaction is light-independent. The L component serves as a unique electron donor to the NB-component of the complex, and binds Mg-ATP. This chain is Light-independent protochlorophyllide reductase iron-sulfur ATP-binding protein, found in Synechococcus sp. (strain JA-2-3B'a(2-13)) (Cyanobacteria bacterium Yellowstone B-Prime).